The following is a 304-amino-acid chain: 2-phospho-L-lactate transferase (304 aa).

7,8-didemethyl-8-hydroxy-5-deazariboflavin is bound at residue D49.

Belongs to the CofD family. As to quaternary structure, homodimer. The cofactor is Mg(2+).

It carries out the reaction (2S)-lactyl-2-diphospho-5'-guanosine + 7,8-didemethyl-8-hydroxy-5-deazariboflavin = oxidized coenzyme F420-0 + GMP + H(+). It participates in cofactor biosynthesis; coenzyme F420 biosynthesis. In terms of biological role, catalyzes the transfer of the 2-phospholactate moiety from (2S)-lactyl-2-diphospho-5'-guanosine to 7,8-didemethyl-8-hydroxy-5-deazariboflavin (FO) with the formation of oxidized coenzyme F420-0 and GMP. The polypeptide is 2-phospho-L-lactate transferase (Methanocorpusculum labreanum (strain ATCC 43576 / DSM 4855 / Z)).